The primary structure comprises 286 residues: 33 kDa chaperonin (286 aa).

Disulfide bonds link C225-C227 and C258-C261.

Belongs to the HSP33 family. Under oxidizing conditions two disulfide bonds are formed involving the reactive cysteines. Under reducing conditions zinc is bound to the reactive cysteines and the protein is inactive.

It is found in the cytoplasm. Redox regulated molecular chaperone. Protects both thermally unfolding and oxidatively damaged proteins from irreversible aggregation. Plays an important role in the bacterial defense system toward oxidative stress. The protein is 33 kDa chaperonin of Shewanella sp. (strain ANA-3).